The primary structure comprises 183 residues: Oligoribonuclease (183 aa).

In terms of domain architecture, Exonuclease spans 9–172 (LIWIDLEMTG…DDIRESIEEL (164 aa)). The active site involves Tyr-130.

This sequence belongs to the oligoribonuclease family.

The protein resides in the cytoplasm. 3'-to-5' exoribonuclease specific for small oligoribonucleotides. The polypeptide is Oligoribonuclease (Haemophilus ducreyi (strain 35000HP / ATCC 700724)).